The sequence spans 414 residues: MRKTIFAFLTGLMMFGTITAASASPDSKNQTAKKPKVQTGIDTLLPDYKKQLKGKRIGLITNPAGVNTSLKSSVDILYENPDIKLTALFGPEHGVRGDAQAGDEVGSYIDEKTGVPVYSLYGKTKKPTPEMLKNVDILMFDIQDVGTRFYTYIYTMAYAMEAAKENGIPFMVLDRPNPQGGNHIEGPILEPEYASFVGLYPIPLKHGMTIGELASLFNKEFSIDADLTVVKMKHWKRKMDFDDTRLPFVLPSPNMPTVESTFVYPATGLIEGTNISEGRGTTKPFELIGAPFIKSTELEETLNSLHLPGVTFRAASFTPTFSKHQGTLCHGVQLYVTDRDKFEAVKTGLSVIKTIHDLYPEDFEFLSTGSFDKLAGNGWIRTKIENGTSVENIINSYEKTLQQFSKTRKKYLIY.

Positions 1-23 are cleaved as a signal peptide; the sequence is MRKTIFAFLTGLMMFGTITAASA.

It belongs to the glycoside hydrolase 171 family. In terms of assembly, homodimer in solution.

The protein localises to the secreted. It catalyses the reaction Hydrolysis of terminal, non-reducing N-acetylmuramic residues.. Functionally, catalyzes the exo-lytic cleavage of beta-1,4-N-acetylmuramate (beta-1,4-MurNAc) from the non-reducing ends of peptidoglycan chains. Specifically hydrolyzes the natural, peptidoglycan-derived disaccharide MurNAc-GlcNAc and the artificial substrate para-nitrophenyl beta-N-acetylmuramic acid (pNP-MurNAc). Requires a MurNAc entity at the non-reducing end, and cannot cleave GlcNAc-MurNAc. Probably plays a role in cell wall turnover and recycling. This Bacillus subtilis (strain 168) protein is Peptidoglycan beta-N-acetylmuramidase NamZ.